Here is a 663-residue protein sequence, read N- to C-terminus: Polyunsaturated fatty acid lipoxygenase ALOX15 (663 aa).

Positions 2 to 115 (GVYRVCVSTG…VQSLPVGTGC (114 aa)) constitute a PLAT domain. The 548-residue stretch at 116–663 (TTVGDPQGLF…PSIVENSVAI (548 aa)) folds into the Lipoxygenase domain. 5 residues coordinate Fe cation: His361, His366, His541, His545, and Ile663.

This sequence belongs to the lipoxygenase family. Interacts with PEBP1; in response to IL13/interleukin-13, prevents the interaction of PEBP1 with RAF1 to activate the ERK signaling cascade. It depends on Fe cation as a cofactor. As to expression, detected in reticulocytes (at protein level).

The protein localises to the cytoplasm. It localises to the cytosol. It is found in the cell membrane. Its subcellular location is the lipid droplet. It carries out the reaction (5Z,8Z,11Z,14Z)-eicosatetraenoate + O2 = (12S)-hydroperoxy-(5Z,8Z,10E,14Z)-eicosatetraenoate. The enzyme catalyses (5Z,8Z,11Z,14Z)-eicosatetraenoate + O2 = (15S)-hydroperoxy-(5Z,8Z,11Z,13E)-eicosatetraenoate. It catalyses the reaction (9Z,12Z)-octadecadienoate + O2 = (13S)-hydroperoxy-(9Z,11E)-octadecadienoate. The catalysed reaction is (5Z,8Z,11Z,14Z)-eicosatetraenoate + 2 O2 = (14R,15S)-dihydroperoxy-(5Z,8Z,10E,12E)-eicosatetraenoate. It carries out the reaction (5Z,8Z,11Z,14Z)-eicosatetraenoate + 2 O2 = (8S,15S)-dihydroperoxy-(5Z,9E,11Z,13E)-eicosatetraenoate. The enzyme catalyses (14S,15R)-epoxy-(5Z,8Z,11Z)-eicosatrienoate + O2 = (8S)-hydroperoxy-(14S,15R)-epoxy-(5Z,9E,11Z)-eicosatrienoate. It catalyses the reaction (14S,15R)-epoxy-(5Z,8Z,11Z)-eicosatrienoate + O2 = (12S)-hydroperoxy-(14S,15R)-epoxy-(5Z,8Z,10E)-eicosatrienoate. The catalysed reaction is (14R,15S)-epoxy-(5Z,8Z,11Z)-eicosatrienoate + O2 = (5S)-hydroperoxy-(14R,15S)-epoxy-(6E,8Z,11Z)-eicosatrienoate. It carries out the reaction (14R,15S)-epoxy-(5Z,8Z,11Z)-eicosatrienoate + O2 = (12S)-hydroperoxy-(14R,15S)-epoxy-(5Z,8Z,10E)-eicosatrienoate. The enzyme catalyses (15R)-hydroperoxy-(5Z,8Z,11Z,13E)-eicosatetraenoate = 15-oxo-(5Z,8Z,11Z,13E)-eicosatetraenoate + H2O. It catalyses the reaction (15S)-hydroperoxy-(5Z,8Z,11Z,13E)-eicosatetraenoate = (14S,15S)-epoxy-(5Z,8Z,10E,12E)-eicosatetraenoate + H2O. The catalysed reaction is (12S)-hydroperoxy-(5Z,8Z,10E,14Z)-eicosatetraenoate = (8S)-hydroxy-(11S,12S)-epoxy-(5Z,9E,14Z)-eicosatrienoate. It carries out the reaction (4Z,7Z,10Z,13Z,16Z)-docosapentaenoate + O2 = 14-hydroperoxy-(4Z,7Z,10Z,12E,16Z)-docosapentaenoate. The enzyme catalyses (7Z,10Z,13Z,16Z,19Z)-docosapentaenoate + O2 = 14-hydroperoxy-(7Z,10Z,12E,16Z,19Z)-docosapentaenoate. It catalyses the reaction (4Z,7Z,10Z,13Z,16Z,19Z)-docosahexaenoate + O2 = (14S)-hydroperoxy-(4Z,7Z,10Z,12E,16Z,19Z)-docosahexaenoate. The catalysed reaction is (4Z,7Z,10Z,13Z,16Z,19Z)-docosahexaenoate + O2 = (17S)-hydroperoxy-(4Z,7Z,10Z,13Z,15E,19Z)-docosahexaenoate. It carries out the reaction (7S)-hydroperoxy-(4Z,8E,10Z,13Z,16Z,19Z)-docosahexaenoate + O2 = (7S,14S)-dihydroperoxy-(4Z,8E,10Z,12E,16Z,19Z)-docosahexaenoate. The enzyme catalyses (7S)-hydroperoxy-(4Z,8E,10Z,13Z,16Z,19Z)-docosahexaenoate + O2 = (7S,17S)-dihydroperoxy-(4Z,8E,10Z,13Z,15E,19Z)-docosahexaenoate. It catalyses the reaction (4Z,7Z,10Z,13Z,16Z,19Z)-docosahexaenoate + O2 = (11S)-hydroperoxy-(4Z,7Z,9E,13Z,16Z,19Z)-docosahexaenoate. The catalysed reaction is N-(5Z,8Z,11Z,14Z)-eicosatetraenoyl-taurine + O2 = N-(15S)-hydroperoxy-(5Z,8Z,11Z,13E)-eicosatetraenoyl-taurine. It carries out the reaction N-(5Z,8Z,11Z,14Z)-eicosatetraenoyl-gamma-aminobutanoate + O2 = N-(15S)-hydroperoxy-(5Z,8Z,11Z,13E)-eicosatetraenoyl-gamma-aminobutanoate. The enzyme catalyses N-(5Z,8Z,11Z,14Z)-eicosatetraenoyl-glycine + O2 = N-(15S)-hydroperoxy-(5Z,8Z,11Z,13E)-eicosatetraenoyl-glycine. It catalyses the reaction N-(5Z,8Z,11Z,14Z)-eicosatetraenoyl-L-alanine + O2 = N-(15S)-hydroperoxy-(5Z,8Z,11Z,13E)-eicosatetraenoyl-alanine. The catalysed reaction is N-(5Z,8Z,11Z,14Z)-eicosatetraenoyl-taurine + O2 = N-(12S)-hydroperoxy-(5Z,8Z,10E,14Z)-eicosatetraenoyl-taurine. It carries out the reaction N-(5Z,8Z,11Z,14Z)-eicosatetraenoyl-gamma-aminobutanoate + O2 = N-(12S)-hydroperoxy-(5Z,8Z,10E,14Z)-eicosatetraenoyl-gamma-aminobutanoate. The enzyme catalyses N-(5Z,8Z,11Z,14Z)-eicosatetraenoyl-glycine + O2 = N-(12S)-hydroperoxy-(5Z,8Z,10E,14Z)-eicosatetraenoyl-glycine. It catalyses the reaction N-(5Z,8Z,11Z,14Z)-eicosatetraenoyl-L-alanine + O2 = N-(12S)-hydroperoxy-(5Z,8Z,10E,14Z)-eicosatetraenoyl-alanine. It participates in lipid metabolism; hydroperoxy eicosatetraenoic acid biosynthesis. Functionally, non-heme iron-containing dioxygenase that catalyzes the stereo-specific peroxidation of free and esterified polyunsaturated fatty acids generating a spectrum of bioactive lipid mediators. It inserts peroxyl groups at C12 or C15 of arachidonate ((5Z,8Z,11Z,14Z)-eicosatetraenoate) producing both 12-hydroperoxyeicosatetraenoate/12-HPETE and 15-hydroperoxyeicosatetraenoate/15-HPETE. It may then act on 12-HPETE to produce hepoxilins, which may show pro-inflammatory properties. Can also peroxidize linoleate ((9Z,12Z)-octadecadienoate) to 13-hydroperoxyoctadecadienoate. May participate in the sequential oxidations of DHA ((4Z,7Z,10Z,13Z,16Z,19Z)-docosahexaenoate) to generate specialized pro-resolving mediators (SPMs)like resolvin D5 ((7S,17S)-diHPDHA) and (7S,14S)-diHPDHA, that actively down-regulate the immune response and have anti-aggregation properties with platelets. Can convert epoxy fatty acids to hydroperoxy-epoxides derivatives followed by an intramolecular nucleophilic substitution leading to the formation of monocyclic endoperoxides. Plays an important role during the maintenance of self-tolerance by peroxidizing membrane-bound phosphatidylethanolamine which can then signal the sorting process for clearance of apoptotic cells during inflammation and prevent an autoimmune response. In addition to its role in the immune and inflammatory responses, this enzyme may play a role in epithelial wound healing in the cornea through production of lipoxin A4 (LXA(4)) and docosahexaenoic acid-derived neuroprotectin D1 (NPD1; 10R,17S-HDHA), both lipid autacoids exhibit anti-inflammatory and neuroprotective properties. Furthermore, it may regulate actin polymerization which is crucial for several biological processes such as the phagocytosis of apoptotic cells. It is also implicated in the generation of endogenous ligands for peroxisome proliferator activated receptor (PPAR-gamma), hence modulating macrophage development and function. It may also exert a negative effect on skeletal development by regulating bone mass through this pathway. As well as participates in ER stress and downstream inflammation in adipocytes, pancreatic islets, and liver. Finally, it is also involved in the cellular response to IL13/interleukin-13. In Oryctolagus cuniculus (Rabbit), this protein is Polyunsaturated fatty acid lipoxygenase ALOX15.